Reading from the N-terminus, the 252-residue chain is 5-oxoprolinase subunit A (252 aa).

It belongs to the LamB/PxpA family. As to quaternary structure, forms a complex composed of PxpA, PxpB and PxpC.

It catalyses the reaction 5-oxo-L-proline + ATP + 2 H2O = L-glutamate + ADP + phosphate + H(+). Functionally, catalyzes the cleavage of 5-oxoproline to form L-glutamate coupled to the hydrolysis of ATP to ADP and inorganic phosphate. The sequence is that of 5-oxoprolinase subunit A from Mycobacterium ulcerans (strain Agy99).